A 360-amino-acid chain; its full sequence is Peptide chain release factor 1 (360 aa).

Q235 carries the N5-methylglutamine modification.

The protein belongs to the prokaryotic/mitochondrial release factor family. Methylated by PrmC. Methylation increases the termination efficiency of RF1.

The protein localises to the cytoplasm. Peptide chain release factor 1 directs the termination of translation in response to the peptide chain termination codons UAG and UAA. The polypeptide is Peptide chain release factor 1 (Delftia acidovorans (strain DSM 14801 / SPH-1)).